A 138-amino-acid chain; its full sequence is UPF0047 protein YjbQ (138 aa).

The protein belongs to the UPF0047 family.

The protein is UPF0047 protein YjbQ (yjbQ) of Escherichia coli O157:H7.